The following is a 530-amino-acid chain: UDP-glucuronosyltransferase 2B17 (530 aa).

The signal sequence occupies residues 1-23 (MSLKWMSVFLLMQLSCYFSSGSC). Residue asparagine 65 is glycosylated (N-linked (GlcNAc...) asparagine). N6-succinyllysine is present on lysine 136. N-linked (GlcNAc...) asparagine glycosylation is found at asparagine 316 and asparagine 483. The helical transmembrane segment at 495-515 (IAFLLACVATMIFMITKCCLF) threads the bilayer.

It belongs to the UDP-glycosyltransferase family. As to expression, expressed in various tissues including the liver, kidney, testis, uterus, placenta, mammary gland, adrenal gland, skin and prostate.

The protein resides in the endoplasmic reticulum membrane. It carries out the reaction glucuronate acceptor + UDP-alpha-D-glucuronate = acceptor beta-D-glucuronoside + UDP + H(+). The catalysed reaction is 17alpha-estradiol + UDP-alpha-D-glucuronate = 17alpha-estradiol 3-O-(beta-D-glucuronate) + UDP + H(+). The enzyme catalyses 17alpha-estradiol + UDP-alpha-D-glucuronate = 17alpha-estradiol 17-O-(beta-D-glucuronate) + UDP + H(+). It catalyses the reaction 17beta-estradiol + UDP-alpha-D-glucuronate = 17beta-estradiol 17-O-(beta-D-glucuronate) + UDP + H(+). It carries out the reaction 17beta-hydroxy-5alpha-androstan-3-one + UDP-alpha-D-glucuronate = 5alpha-dihydrotestosterone 17-O-(beta-D-glucuronate) + UDP + H(+). The catalysed reaction is testosterone + UDP-alpha-D-glucuronate = testosterone 17-O-(beta-D-glucuronate) + UDP + H(+). UDP-glucuronosyltransferase (UGT) that catalyzes phase II biotransformation reactions in which lipophilic substrates are conjugated with glucuronic acid to increase the metabolite's water solubility, thereby facilitating excretion into either the urine or bile. Catalyzes the glucuronidation of endogenous steroid hormones such as androgens (epitestosterone, androsterone) and estrogens (estradiol, epiestradiol). The protein is UDP-glucuronosyltransferase 2B17 of Homo sapiens (Human).